The primary structure comprises 216 residues: Uracil phosphoribosyltransferase (216 aa).

5-phospho-alpha-D-ribose 1-diphosphate is bound by residues Arg-85, Arg-110, and 135–143 (DPMVATGYS). Uracil is bound by residues Ile-200 and 205–207 (GDA). Asp-206 is a 5-phospho-alpha-D-ribose 1-diphosphate binding site.

This sequence belongs to the UPRTase family. Mg(2+) serves as cofactor.

It catalyses the reaction UMP + diphosphate = 5-phospho-alpha-D-ribose 1-diphosphate + uracil. It participates in pyrimidine metabolism; UMP biosynthesis via salvage pathway; UMP from uracil: step 1/1. Allosterically activated by GTP. Functionally, catalyzes the conversion of uracil and 5-phospho-alpha-D-ribose 1-diphosphate (PRPP) to UMP and diphosphate. This is Uracil phosphoribosyltransferase from Burkholderia pseudomallei (strain 668).